Here is a 49-residue protein sequence, read N- to C-terminus: uncharacterized protein (49 aa).

This is an uncharacterized protein from Homo sapiens (Human).